The sequence spans 259 residues: Probable dihydroorotate dehydrogenase B (NAD(+)), electron transfer subunit (259 aa).

Positions 1–89 (MLPLNATIVQ…RGPFGKGFSL (89 aa)) constitute an FAD-binding FR-type domain. Positions 211, 216, 219, and 229 each coordinate [2Fe-2S] cluster.

It belongs to the PyrK family. Heterotetramer of 2 PyrK and 2 PyrD type B subunits. It depends on [2Fe-2S] cluster as a cofactor. Requires FAD as cofactor.

The protein operates within pyrimidine metabolism; UMP biosynthesis via de novo pathway; orotate from (S)-dihydroorotate (NAD(+) route): step 1/1. In terms of biological role, responsible for channeling the electrons from the oxidation of dihydroorotate from the FMN redox center in the PyrD type B subunit to the ultimate electron acceptor NAD(+). The protein is Probable dihydroorotate dehydrogenase B (NAD(+)), electron transfer subunit of Methanosarcina barkeri (strain Fusaro / DSM 804).